The following is a 142-amino-acid chain: Alpha-lactalbumin (142 aa).

The signal sequence occupies residues 1–18; it reads MMSFVSLLLVGILFHATQ. One can recognise a C-type lysozyme domain in the interval 20 to 142; the sequence is EQLTKCEVFR…KLDQWLCEKL (123 aa). 4 disulfide bridges follow: Cys-25–Cys-139, Cys-47–Cys-130, Cys-80–Cys-96, and Cys-92–Cys-110. Residues Asn-64 and Asn-93 are each glycosylated (N-linked (GlcNAc...) asparagine). Positions 98, 101, 103, 106, and 107 each coordinate Ca(2+).

The protein belongs to the glycosyl hydrolase 22 family. As to quaternary structure, lactose synthase (LS) is a heterodimer of a catalytic component, beta1,4-galactosyltransferase (beta4Gal-T1) and a regulatory component, alpha-lactalbumin (LA). As to expression, mammary gland specific. Secreted in milk.

The protein resides in the secreted. Regulatory subunit of lactose synthase, changes the substrate specificity of galactosyltransferase in the mammary gland making glucose a good acceptor substrate for this enzyme. This enables LS to synthesize lactose, the major carbohydrate component of milk. In other tissues, galactosyltransferase transfers galactose onto the N-acetylglucosamine of the oligosaccharide chains in glycoproteins. The protein is Alpha-lactalbumin (LALBA) of Bubalus bubalis (Domestic water buffalo).